The primary structure comprises 306 residues: Mitochondrial substrate carrier family protein ucpA (306 aa).

The Mitochondrial intermembrane portion of the chain corresponds to 1–15 (MSVNLNNNKNNKNKV). 3 Solcar repeats span residues 13–103 (NKVA…ISNA), 112–204 (YFFL…CKNL), and 211–301 (DGIY…FKKL). The helical transmembrane segment at 16–36 (AIGFISGSLASICATTVTNPI) threads the bilayer. Residues 37-83 (ELVKTRLQLQGELQLSQRIYNGVWDAFKQIYKTEGIRGLQSGLIPAY) lie on the Mitochondrial matrix side of the membrane. The helical transmembrane segment at 84 to 103 (FSQATMQGIRLGSFDLISNA) threads the bilayer. Residues 104–117 (LGAKPNQDYFFLKN) are Mitochondrial intermembrane-facing. Residues 118-138 (LLAGATAGAIGAAAGSPFDLV) form a helical membrane-spanning segment. Topologically, residues 139 to 174 (KVRMQAANMYKNDPQFVGYSSSFAAFKQIIQKEGFK) are mitochondrial matrix. Residues 175-195 (GLTRGMLTSAQRTAVGSAIQL) traverse the membrane as a helical segment. Residues 196-211 (STYGSCKNLVLNFVDD) are Mitochondrial intermembrane-facing. A helical membrane pass occupies residues 212-232 (GIYAYIISSMVAGFIVTFGMN). Over 233–276 (PFDVARTRLYFQGKGNSHGEIYKGLMDCVYKTVKKEGFGAVYKG) the chain is Mitochondrial matrix. The helical transmembrane segment at 277–295 (FWAHYLRLGPHTILTLVFW) threads the bilayer. Residues 296 to 306 (EQFKKLFSGEL) are Mitochondrial intermembrane-facing.

Belongs to the mitochondrial carrier (TC 2.A.29) family.

Its subcellular location is the mitochondrion inner membrane. Functionally, mitochondrial solute carriers shuttle metabolites, nucleotides, and cofactors through the mitochondrial inner membrane. Transports oxaloacetate and sulfate. The chain is Mitochondrial substrate carrier family protein ucpA (ucpA) from Dictyostelium discoideum (Social amoeba).